The sequence spans 156 residues: Small ribosomal subunit protein uS7 (156 aa).

The protein belongs to the universal ribosomal protein uS7 family. In terms of assembly, part of the 30S ribosomal subunit. Contacts proteins S9 and S11.

One of the primary rRNA binding proteins, it binds directly to 16S rRNA where it nucleates assembly of the head domain of the 30S subunit. Is located at the subunit interface close to the decoding center, probably blocks exit of the E-site tRNA. The chain is Small ribosomal subunit protein uS7 from Lactobacillus johnsonii (strain CNCM I-12250 / La1 / NCC 533).